A 113-amino-acid polypeptide reads, in one-letter code: Phosphoribosyl-ATP pyrophosphatase (113 aa).

It belongs to the PRA-PH family.

It localises to the cytoplasm. It carries out the reaction 1-(5-phospho-beta-D-ribosyl)-ATP + H2O = 1-(5-phospho-beta-D-ribosyl)-5'-AMP + diphosphate + H(+). It functions in the pathway amino-acid biosynthesis; L-histidine biosynthesis; L-histidine from 5-phospho-alpha-D-ribose 1-diphosphate: step 2/9. The chain is Phosphoribosyl-ATP pyrophosphatase from Janthinobacterium sp. (strain Marseille) (Minibacterium massiliensis).